The sequence spans 126 residues: MGKEKNPRRVGENEAFAKVKMLRTSPQKLNLVAALIRGKKVDKAIADLTFSKKRISQDVLKCLQSAIANAENNHGLDVDELVVSEAFCGKNLVMKRGRPRARGRFGKIMKPFSELTIKVKQVGETA.

This sequence belongs to the universal ribosomal protein uL22 family. In terms of assembly, part of the 50S ribosomal subunit.

Functionally, this protein binds specifically to 23S rRNA; its binding is stimulated by other ribosomal proteins, e.g. L4, L17, and L20. It is important during the early stages of 50S assembly. It makes multiple contacts with different domains of the 23S rRNA in the assembled 50S subunit and ribosome. In terms of biological role, the globular domain of the protein is located near the polypeptide exit tunnel on the outside of the subunit, while an extended beta-hairpin is found that lines the wall of the exit tunnel in the center of the 70S ribosome. The sequence is that of Large ribosomal subunit protein uL22 from Cereibacter sphaeroides (strain ATCC 17029 / ATH 2.4.9) (Rhodobacter sphaeroides).